A 162-amino-acid polypeptide reads, in one-letter code: Caveolin-2 (162 aa).

At Met1–Lys86 the chain is on the cytoplasmic side. The residue at position 19 (Tyr19) is a Phosphotyrosine. Phosphoserine is present on residues Ser20, Ser23, and Ser36. The helical intramembrane region spans Phe87 to Leu107. Residues Ser108–Asp162 are Cytoplasmic-facing.

Belongs to the caveolin family. Monomer or homodimer. Interacts with CAV1; the interaction forms a stable heterooligomeric complex that is required for targeting to lipid rafts and for caveolae formation. Tyrosine phosphorylated forms do not form heterooligomers with the Tyr-19-phosphorylated form existing as a monomer or dimer. Interacts (tyrosine phosphorylated form) with the SH2 domain-containing proteins, RASA1, NCK1 and SRC. Interacts (tyrosine phosphorylated form) with INSR. Interacts (Tyr-19 phosphorylated form) with MAPK1 (phosphorylated form); the interaction, promoted by insulin, leads to nuclear location and MAPK1 activation. Interacts with STAT3; the interaction is increased on insulin-induced tyrosine phosphorylation leading to STAT activation. In terms of processing, phosphorylated on serine and tyrosine residues. CAV1 promotes phosphorylation on Ser-23 which then targets the complex to the plasma membrane, lipid rafts and caveolae. Phosphorylation on Ser-36 appears to modulate mitosis in endothelial cells. Phosphorylation on Tyr-19 is required for insulin-induced phosphorylation of MAPK1 and DNA binding of STAT3. Tyrosine phosphorylation is induced by both EGF and insulin.

The protein localises to the nucleus. Its subcellular location is the golgi apparatus membrane. It localises to the cell membrane. It is found in the membrane. The protein resides in the caveola. Functionally, may act as a scaffolding protein within caveolar membranes. Interacts directly with G-protein alpha subunits and can functionally regulate their activity. Acts as an accessory protein in conjunction with CAV1 in targeting to lipid rafts and driving caveolae formation. The Ser-36 phosphorylated form has a role in modulating mitosis in endothelial cells. Positive regulator of cellular mitogenesis of the MAPK signaling pathway. Required for the insulin-stimulated nuclear translocation and activation of MAPK1 and STAT3, and the subsequent regulation of cell cycle progression. This chain is Caveolin-2 (CAV2), found in Echinops telfairi (Lesser hedgehog tenrec).